A 410-amino-acid chain; its full sequence is MSAAQGWDRNRRRGGGAAGGASGVSGAGAAGGGRGTGQLNRFVQLSGRPHLPGHRPPPARSGHRCVADNTNLYVFGGYNPDYDESGGPDNEDYPLFRELWRYHFATGVWHQMGTDGYMPRELASMSLVLHGNNLLVFGGTGIPFGESNGNDVHVCNVKYKRWALLSCRGKRPSRIYGQAMALINGSLYVFGGTTGYIYSTDLHKLDLNTMVWTQLKPNNLSCDLPEERYRHEIAHDGQRIYILGGGTSWTAYSLNKIHAYNLETNAWEEIATKPHEKIGFPAARRCHSCVQIKNDVFICGGYNGEVILGDIWKLNLQTFQWVKLPATMPEPVYFHCAAVTPAGCMYIHGGVVNIHENKRTGSLFKIWLVVPSLLELAWEKLLAAFPNLANLSRTQLLHLGLTQELIERLK.

The segment at Met1 to Asn40 is disordered. Residue Arg13 is modified to Omega-N-methylarginine. The segment covering Gly15 to Thr36 has biased composition (gly residues). Kelch repeat units lie at residues Gly87 to Val154, Cys155 to Tyr198, Ser199 to Tyr260, Asn261 to Phe319, Gln320 to Phe364, and Lys365 to Gln403. An interaction with CUL2 region spans residues Val369–Lys410.

The protein belongs to the KLHDC10 family. In terms of assembly, component of a CRL2 E3 ubiquitin-protein ligase complex, also named ECS (Elongin BC-CUL2/5-SOCS-box protein) complex, composed of CUL2, Elongin BC (ELOB and ELOC), RBX1 and substrate-specific adapter KLHDC10. Interacts (via the 6 Kelch repeats) with PPP5C.

The protein resides in the nucleus. It localises to the cytoplasm. The protein operates within protein modification; protein ubiquitination. Its function is as follows. Substrate-recognition component of a Cul2-RING (CRL2) E3 ubiquitin-protein ligase complex of the DesCEND (destruction via C-end degrons) pathway, which recognizes a C-degron located at the extreme C-terminus of target proteins, leading to their ubiquitination and degradation. The C-degron recognized by the DesCEND pathway is usually a motif of less than ten residues and can be present in full-length proteins, truncated proteins or proteolytically cleaved forms. The CRL2(KLHDC10) complex specifically recognizes proteins with a proline-glycine (Pro-Gly) or an alanine tail (CAT tail) at the C-terminus, leading to their ubiquitination and degradation. The CRL2(KLHDC10) complex is involved in the ribosome-associated quality control (RQC) pathway, which mediates the extraction of incompletely synthesized nascent chains from stalled ribosomes: CRL2(KLHDC10) acts downstream of NEMF and recognizes CAT tails associated with stalled nascent chains, leading to their ubiquitination and degradation. Participates in the oxidative stress-induced cell death through MAP3K5 activation. Inhibits PPP5C phosphatase activity on MAP3K5. Acts as a regulator of necroptosis. The sequence is that of Kelch domain-containing protein 10 from Rattus norvegicus (Rat).